The chain runs to 359 residues: Histamine H2 receptor (359 aa).

The Extracellular portion of the chain corresponds to 1–22 (MAFNGTVPSFCMDFTVYKVTIS). N-linked (GlcNAc...) asparagine glycosylation occurs at Asn-4. The helical transmembrane segment at 23–44 (VILIILILVTVAGNVVVCLAVG) threads the bilayer. Residues 45–57 (LNRRLRSLTNCFI) are Cytoplasmic-facing. A helical transmembrane segment spans residues 58-81 (VSLAVTDLLLGLLVLPFSAIYQLS). Topologically, residues 82-92 (CKWSFSKVFCN) are extracellular. The cysteines at positions 91 and 174 are disulfide-linked. The chain crosses the membrane as a helical span at residues 93–114 (IYTSLDVMLCTASILNLFMISL). Residues 115–134 (DRYCAVTDPLRYPVLITPAR) lie on the Cytoplasmic side of the membrane. Residues 135 to 159 (VAISLVFIWVISITLSFLSIHLGWN) form a helical membrane-spanning segment. At 160–180 (SRNETSKDNDTIVKCKVQVNE) the chain is on the extracellular side. A helical membrane pass occupies residues 181-204 (VYGLVDGLVTFYLPLLIMCITYFR). Topologically, residues 205–234 (IFKIAREQARRINHIGSWKAATIREHKATV) are cytoplasmic. The helical transmembrane segment at 235–258 (TLAAVMGAFIICWFPYFTVFVYRG) threads the bilayer. Over 259 to 267 (LKGDDAVNE) the chain is Extracellular. The helical transmembrane segment at 268-289 (VFEDVVLWLGYANSALNPILYA) threads the bilayer. Topologically, residues 290 to 359 (ALNRDFRTAY…VTAPQGATNR (70 aa)) are cytoplasmic. A lipid anchor (S-palmitoyl cysteine) is attached at Cys-305.

This sequence belongs to the G-protein coupled receptor 1 family.

It localises to the cell membrane. In terms of biological role, the H2 subclass of histamine receptors mediates gastric acid secretion. The activity of this receptor is mediated by G proteins which activate adenylyl cyclase. In Cavia porcellus (Guinea pig), this protein is Histamine H2 receptor (HRH2).